The sequence spans 213 residues: GTP cyclohydrolase 1 (213 aa).

Zn(2+) contacts are provided by C104, H107, and C175.

The protein belongs to the GTP cyclohydrolase I family. In terms of assembly, toroid-shaped homodecamer, composed of two pentamers of five dimers.

It carries out the reaction GTP + H2O = 7,8-dihydroneopterin 3'-triphosphate + formate + H(+). It participates in cofactor biosynthesis; 7,8-dihydroneopterin triphosphate biosynthesis; 7,8-dihydroneopterin triphosphate from GTP: step 1/1. The sequence is that of GTP cyclohydrolase 1 from Brucella abortus (strain 2308).